We begin with the raw amino-acid sequence, 152 residues long: Ribosome maturation factor RimP (152 aa).

The protein belongs to the RimP family.

It is found in the cytoplasm. Required for maturation of 30S ribosomal subunits. In Shigella boydii serotype 4 (strain Sb227), this protein is Ribosome maturation factor RimP.